A 273-amino-acid polypeptide reads, in one-letter code: Thiazole synthase (273 aa).

The Schiff-base intermediate with DXP role is filled by Lys110. 1-deoxy-D-xylulose 5-phosphate-binding positions include Gly171, 197-198 (AG), and 219-220 (NT). The interval 251–273 (MAAQDSAQPSTPVLGTPFWHHAP) is disordered.

Belongs to the ThiG family. In terms of assembly, homotetramer. Forms heterodimers with either ThiH or ThiS.

The protein localises to the cytoplasm. The enzyme catalyses [ThiS sulfur-carrier protein]-C-terminal-Gly-aminoethanethioate + 2-iminoacetate + 1-deoxy-D-xylulose 5-phosphate = [ThiS sulfur-carrier protein]-C-terminal Gly-Gly + 2-[(2R,5Z)-2-carboxy-4-methylthiazol-5(2H)-ylidene]ethyl phosphate + 2 H2O + H(+). Its pathway is cofactor biosynthesis; thiamine diphosphate biosynthesis. Its function is as follows. Catalyzes the rearrangement of 1-deoxy-D-xylulose 5-phosphate (DXP) to produce the thiazole phosphate moiety of thiamine. Sulfur is provided by the thiocarboxylate moiety of the carrier protein ThiS. In vitro, sulfur can be provided by H(2)S. The sequence is that of Thiazole synthase from Variovorax paradoxus (strain S110).